Consider the following 245-residue polypeptide: tRNA pseudouridine synthase A (245 aa).

Catalysis depends on D52, which acts as the Nucleophile. Y111 provides a ligand contact to substrate.

The protein belongs to the tRNA pseudouridine synthase TruA family. In terms of assembly, homodimer.

The enzyme catalyses uridine(38/39/40) in tRNA = pseudouridine(38/39/40) in tRNA. Functionally, formation of pseudouridine at positions 38, 39 and 40 in the anticodon stem and loop of transfer RNAs. The polypeptide is tRNA pseudouridine synthase A (Rickettsia akari (strain Hartford)).